A 206-amino-acid chain; its full sequence is Large ribosomal subunit protein uL22m (206 aa).

A mitochondrion-targeting transit peptide spans 1–40; it reads MAAAVLGQLGALWIHNLRSRGRLAWGVLPQSYVHTSASLD.

Belongs to the universal ribosomal protein uL22 family. As to quaternary structure, component of the mitochondrial ribosome large subunit (39S) which comprises a 16S rRNA and about 50 distinct proteins.

The protein resides in the mitochondrion. In Pongo abelii (Sumatran orangutan), this protein is Large ribosomal subunit protein uL22m (MRPL22).